A 176-amino-acid polypeptide reads, in one-letter code: Interleukin-19 (176 aa).

The N-terminal stretch at 1–24 (MKTQCASTWLLGMTLILCSVHIYS) is a signal peptide. Intrachain disulfides connect C28-C120, C74-C126, and C75-C128. N-linked (GlcNAc...) asparagine glycosylation is present at N56. 2 N-linked (GlcNAc...) asparagine glycosylation sites follow: N127 and N134.

The protein belongs to the IL-10 family.

It is found in the secreted. Its function is as follows. Cytokine that functions as an anti-inflammatory and proangiogenic factor. Polarizes adaptive immunity to an anti-inflammatory phenotype through induction of T-helper 2 responses by both down-regulation of IFN-gamma and up-regulation of IL4 and IL5. Produced by osteocytes, stimulates granulopoiesis and neutrophil formation. Exerts its biological effect through a receptor complex consisting of a heterodimer of IL20RA and IL20RB. In turn, activates the Janus kinase (JAK) and signal transducer and activator of transcription (STAT) pathway, and importantly, STAT3. The polypeptide is Interleukin-19 (Il19) (Mus musculus (Mouse)).